Reading from the N-terminus, the 152-residue chain is Transcriptional repressor NrdR (152 aa).

A zinc finger lies at Cys-3–Cys-34. In terms of domain architecture, ATP-cone spans Leu-48 to Glu-138.

Belongs to the NrdR family. It depends on Zn(2+) as a cofactor.

Negatively regulates transcription of bacterial ribonucleotide reductase nrd genes and operons by binding to NrdR-boxes. This is Transcriptional repressor NrdR from Chlamydia abortus (strain DSM 27085 / S26/3) (Chlamydophila abortus).